A 158-amino-acid polypeptide reads, in one-letter code: Transcriptional repressor NrdR (158 aa).

Residues 3 to 34 (CPSCQNTDSRVLESRAADAGRSVRRRRECLHC) fold into a zinc finger. Residues 49 to 139 (ITVLKRNGNR…VYRDFRGVND (91 aa)) form the ATP-cone domain.

Belongs to the NrdR family. The cofactor is Zn(2+).

In terms of biological role, negatively regulates transcription of bacterial ribonucleotide reductase nrd genes and operons by binding to NrdR-boxes. The chain is Transcriptional repressor NrdR from Prochlorococcus marinus (strain MIT 9313).